We begin with the raw amino-acid sequence, 343 residues long: Aspartate beta-hydroxylase domain-containing protein 2 (343 aa).

Over 1-31 (MWLEWLVAWSWSLDGLRDCIATGIQSVRDCD) the chain is Cytoplasmic. Residues 32–52 (GTAVITVACLLILFVWYCYHV) traverse the membrane as a helical segment. Topologically, residues 53–343 (GREQPRPHVS…ALDFIFAPGR (291 aa)) are lumenal. Residues Asn-77 and Asn-185 are each glycosylated (N-linked (GlcNAc...) asparagine). Residues Trp-202 and Ser-246 each coordinate 2-oxoglutarate. His-257 is a Fe cation binding site. 266 to 268 (RCH) is a binding site for 2-oxoglutarate. His-302 contacts Fe cation. Residue Arg-315 participates in 2-oxoglutarate binding.

It belongs to the aspartyl/asparaginyl beta-hydroxylase family. It depends on Fe cation as a cofactor.

The protein resides in the membrane. In terms of biological role, may function as 2-oxoglutarate-dependent dioxygenase. This Mus musculus (Mouse) protein is Aspartate beta-hydroxylase domain-containing protein 2 (Asphd2).